A 306-amino-acid polypeptide reads, in one-letter code: High osmolarity signaling protein MOS1 (306 aa).

The Cytoplasmic segment spans residues 1-23 (MEHSRPYGGRKRMSLGNILGDPF). The helical transmembrane segment at 24-44 (ALATISISLLAWFITFISCVI) threads the bilayer. Residues 45-67 (AQVQANKNKGLPDKDNPDGNFPP) are Extracellular-facing. A helical transmembrane segment spans residues 68 to 88 (FAWWAVVYSLFLIVGVVIVVA). Over 89–96 (SDAIQTYH) the chain is Cytoplasmic. The helical transmembrane segment at 97-117 (VAVTGYLAGGMVLVTSGVNSL) threads the bilayer. The Extracellular portion of the chain corresponds to 118-126 (VYSKNGARE). Residues 127-147 (AAAAGFILLSMVVIVWIFYFG) traverse the membrane as a helical segment. Residues 148-306 (STPSSTPRAF…IAPSNYLILL (159 aa)) lie on the Cytoplasmic side of the membrane. Positions 204 to 242 (FENPSPVGGASQAPTAPTMPTYGNNTMQPNNKSNDEEVL) are disordered. Positions 224–235 (TYGNNTMQPNNK) are enriched in polar residues. Residues 246 to 306 (DYPYQAKAIY…IAPSNYLILL (61 aa)) form the SH3 domain.

This sequence belongs to the SHO1 family. As to quaternary structure, forms homooligomers.

It localises to the cell membrane. Its function is as follows. Plasma membrane osmosensor that activates the high osmolarity glycerol (HOG) MAPK signaling pathway in response to high osmolarity. Affects fungal virulence. In Metarhizium robertsii (strain ARSEF 23 / ATCC MYA-3075) (Metarhizium anisopliae (strain ARSEF 23)), this protein is High osmolarity signaling protein MOS1 (MOS1).